We begin with the raw amino-acid sequence, 223 residues long: Small heat shock protein hspI, mitochondrial (223 aa).

A mitochondrion-targeting transit peptide spans 1-23 (MYKLSKTTPFFFRRAFLCGRRGG). The 115-residue stretch at 109-223 (KTRGFRSPKT…YVKSTTINVQ (115 aa)) folds into the sHSP domain.

It belongs to the small heat shock protein (HSP20) family.

The protein localises to the mitochondrion. This is Small heat shock protein hspI, mitochondrial (hspI) from Dictyostelium discoideum (Social amoeba).